Reading from the N-terminus, the 121-residue chain is Large ribosomal subunit protein bL20 (121 aa).

This sequence belongs to the bacterial ribosomal protein bL20 family.

Functionally, binds directly to 23S ribosomal RNA and is necessary for the in vitro assembly process of the 50S ribosomal subunit. It is not involved in the protein synthesizing functions of that subunit. The polypeptide is Large ribosomal subunit protein bL20 (Beijerinckia indica subsp. indica (strain ATCC 9039 / DSM 1715 / NCIMB 8712)).